The chain runs to 532 residues: Intercellular adhesion molecule 1 (532 aa).

Residues 1–27 form the signal peptide; it reads MAPSSPRPALPALLVLLGALFPGPGNA. The Extracellular segment spans residues 28–480; that stretch reads QTSVSPPKVI…TVNVLSPRYE (453 aa). Ig-like C2-type domains are found at residues 41 to 103 and 128 to 193; these read GGSV…QSTA and GKDL…LDLR. Cystine bridges form between C48-C92, C52-C96, and C135-C186. The Cell attachment site; atypical signature appears at 152 to 154; it reads RGE. N-linked (GlcNAc...) asparagine glycosylation is found at N202 and N267. Ig-like C2-type domains lie at 230–297 and 325–378; these read DTQG…LGTQ and GTEV…LEVA. 2 cysteine pairs are disulfide-bonded: C237–C290 and C332–C371. N-linked (GlcNAc...) asparagine glycans are attached at residues N385 and N406. 3 disulfide bridges follow: C403–C419, C419–C457, and C431–C457. In terms of domain architecture, Ig-like C2-type 5 spans 412 to 464; that stretch reads NSQQTPMCQAWGNPLPELKCLKDGTFPLPVGESVTVTRDLEGTYLCRARSTQG. A helical membrane pass occupies residues 481 to 503; it reads FVIIAVVAAAVIMGTAGLSTYLY. The Cytoplasmic segment spans residues 504 to 532; that stretch reads NRQRKIRKYRLQQAQKGTPMKPNTQATPP. T521 and T530 each carry phosphothreonine.

The protein belongs to the immunoglobulin superfamily. ICAM family. As to quaternary structure, homodimer. Interacts with MUC1 and promotes cell aggregation in epithelial cells. Interacts with ARHGEF26/SGEF. Interacts (on T cell side) with CD81, CD247 and CD9 at immunological synapses between antigen-presenting cells and T cells. In terms of processing, monoubiquitinated, which is promoted by MARCH9 and leads to endocytosis.

Its subcellular location is the membrane. In terms of biological role, ICAM proteins are ligands for the leukocyte adhesion protein LFA-1 (integrin alpha-L/beta-2). During leukocyte trans-endothelial migration, ICAM1 engagement promotes the assembly of endothelial apical cups through ARHGEF26/SGEF and RHOG activation. This chain is Intercellular adhesion molecule 1 (ICAM1), found in Gorilla gorilla gorilla (Western lowland gorilla).